The following is a 122-amino-acid chain: Large ribosomal subunit protein uL18 (122 aa).

Basic and acidic residues predominate over residues 1 to 11; that stretch reads MLKKPDRNALR. Positions 1–22 are disordered; sequence MLKKPDRNALRDKRRRRVRKKI. The segment covering 12–22 has biased composition (basic residues); sequence DKRRRRVRKKI.

The protein belongs to the universal ribosomal protein uL18 family. Part of the 50S ribosomal subunit; part of the 5S rRNA/L5/L18/L25 subcomplex. Contacts the 5S and 23S rRNAs.

In terms of biological role, this is one of the proteins that bind and probably mediate the attachment of the 5S RNA into the large ribosomal subunit, where it forms part of the central protuberance. This is Large ribosomal subunit protein uL18 from Pelotomaculum thermopropionicum (strain DSM 13744 / JCM 10971 / SI).